The chain runs to 352 residues: uncharacterized protein (352 aa).

A signal peptide spans 1–22 (MAIYLDKLKMPIIIGLIVLIIA).

Belongs to the bacterial solute-binding protein 1 family. WtpA subfamily.

This is an uncharacterized protein from Staphylothermus marinus (strain ATCC 43588 / DSM 3639 / JCM 9404 / F1).